The sequence spans 310 residues: L-lactate dehydrogenase (310 aa).

NAD(+)-binding positions include valine 11, aspartate 32, tyrosine 62, and 76–77 (GV). Residues glutamine 79, arginine 85, and 117 to 120 (NPVD) contribute to the substrate site. NAD(+) is bound by residues 115–117 (ATN) and serine 140. Position 145 to 148 (145 to 148 (DTAR)) interacts with substrate. The beta-D-fructose 1,6-bisphosphate site is built by arginine 150 and histidine 165. Catalysis depends on histidine 172, which acts as the Proton acceptor. Tyrosine 218 carries the post-translational modification Phosphotyrosine. Position 227 (threonine 227) interacts with substrate.

Belongs to the LDH/MDH superfamily. LDH family. In terms of assembly, homotetramer.

Its subcellular location is the cytoplasm. The enzyme catalyses (S)-lactate + NAD(+) = pyruvate + NADH + H(+). It participates in fermentation; pyruvate fermentation to lactate; (S)-lactate from pyruvate: step 1/1. Activated by citrate at pH 5. Allosterically activated by fructose 1,6-bisphosphate (FBP) at pH from 5.8 to 7.2. Functionally, catalyzes the conversion of lactate to pyruvate. The protein is L-lactate dehydrogenase of Thermus aquaticus.